The sequence spans 637 residues: DNA mismatch repair protein MutL (637 aa).

2 disordered regions span residues 352-384 and 405-430; these read DDFT…NVLF and ASVE…AMEQ.

Belongs to the DNA mismatch repair MutL/HexB family.

In terms of biological role, this protein is involved in the repair of mismatches in DNA. It is required for dam-dependent methyl-directed DNA mismatch repair. May act as a 'molecular matchmaker', a protein that promotes the formation of a stable complex between two or more DNA-binding proteins in an ATP-dependent manner without itself being part of a final effector complex. The protein is DNA mismatch repair protein MutL of Halalkalibacterium halodurans (strain ATCC BAA-125 / DSM 18197 / FERM 7344 / JCM 9153 / C-125) (Bacillus halodurans).